The sequence spans 199 residues: UPF0462 protein C4orf33 homolog (199 aa).

It belongs to the UPF0462 family.

This chain is UPF0462 protein C4orf33 homolog, found in Rattus norvegicus (Rat).